The primary structure comprises 492 residues: Probable cobyric acid synthase (492 aa).

The region spanning 248 to 434 (PVRIAVVRLP…MHGLFQNPGA (187 aa)) is the GATase cobBQ-type domain. Cys327 functions as the Nucleophile in the catalytic mechanism. His426 is an active-site residue.

Belongs to the CobB/CobQ family. CobQ subfamily.

Its pathway is cofactor biosynthesis; adenosylcobalamin biosynthesis. Catalyzes amidations at positions B, D, E, and G on adenosylcobyrinic A,C-diamide. NH(2) groups are provided by glutamine, and one molecule of ATP is hydrogenolyzed for each amidation. The protein is Probable cobyric acid synthase of Methanoculleus marisnigri (strain ATCC 35101 / DSM 1498 / JR1).